A 291-amino-acid chain; its full sequence is Methionine aminopeptidase (291 aa).

H65 is a binding site for substrate. The a divalent metal cation site is built by D85, D96, and H155. H163 lines the substrate pocket. Residues E188 and E276 each coordinate a divalent metal cation.

The protein belongs to the peptidase M24A family. Methionine aminopeptidase archaeal type 2 subfamily. In terms of assembly, monomer. Requires Co(2+) as cofactor. Zn(2+) serves as cofactor. Mn(2+) is required as a cofactor. It depends on Fe(2+) as a cofactor.

It catalyses the reaction Release of N-terminal amino acids, preferentially methionine, from peptides and arylamides.. Its function is as follows. Removes the N-terminal methionine from nascent proteins. The N-terminal methionine is often cleaved when the second residue in the primary sequence is small and uncharged (Met-Ala-, Cys, Gly, Pro, Ser, Thr, or Val). This is Methionine aminopeptidase from Archaeoglobus fulgidus (strain ATCC 49558 / DSM 4304 / JCM 9628 / NBRC 100126 / VC-16).